The sequence spans 444 residues: tRNA-2-methylthio-N(6)-dimethylallyladenosine synthase (444 aa).

The MTTase N-terminal domain maps to 6–124; sequence KTFKIITYGC…LPQLIEEIKA (119 aa). Positions 15, 51, 85, 161, 165, and 168 each coordinate [4Fe-4S] cluster. The Radical SAM core domain maps to 147-377; that stretch reads RARGAQAFVT…MELQNSISLA (231 aa). In terms of domain architecture, TRAM spans 380–443; sequence EALVGQEVEV…TWLLKGEMVD (64 aa).

It belongs to the methylthiotransferase family. MiaB subfamily. As to quaternary structure, monomer. [4Fe-4S] cluster is required as a cofactor.

It localises to the cytoplasm. It catalyses the reaction N(6)-dimethylallyladenosine(37) in tRNA + (sulfur carrier)-SH + AH2 + 2 S-adenosyl-L-methionine = 2-methylsulfanyl-N(6)-dimethylallyladenosine(37) in tRNA + (sulfur carrier)-H + 5'-deoxyadenosine + L-methionine + A + S-adenosyl-L-homocysteine + 2 H(+). Catalyzes the methylthiolation of N6-(dimethylallyl)adenosine (i(6)A), leading to the formation of 2-methylthio-N6-(dimethylallyl)adenosine (ms(2)i(6)A) at position 37 in tRNAs that read codons beginning with uridine. The chain is tRNA-2-methylthio-N(6)-dimethylallyladenosine synthase from Moorella thermoacetica (strain ATCC 39073 / JCM 9320).